A 138-amino-acid chain; its full sequence is MRTLWIVAVWLMSVEGNLYQFGKMIKNKTGKPAMFSYSAYGCYCGWGGQGKPQDASDRCCFVHDCCYTRVNDCSPKMTSYSYSFENRDIICGDDDSCRKAVCECDREAAICLGENVNTYDEKYRFYSSSHCVEETEQC.

The first 16 residues, 1–16, serve as a signal peptide directing secretion; it reads MRTLWIVAVWLMSVEG. Cystine bridges form between cysteine 42–cysteine 131, cysteine 44–cysteine 60, cysteine 59–cysteine 111, cysteine 65–cysteine 138, cysteine 66–cysteine 104, cysteine 73–cysteine 97, and cysteine 91–cysteine 102. Ca(2+) contacts are provided by tyrosine 43, glycine 45, and glycine 47. Histidine 63 is an active-site residue. Residue aspartate 64 coordinates Ca(2+). The active site involves aspartate 105.

The protein belongs to the phospholipase A2 family. Group II subfamily. It depends on Ca(2+) as a cofactor.

It localises to the secreted. The catalysed reaction is a 1,2-diacyl-sn-glycero-3-phosphocholine + H2O = a 1-acyl-sn-glycero-3-phosphocholine + a fatty acid + H(+). The polypeptide is Phospholipase A2 EC1 (Echis coloratus (Carpet viper)).